Consider the following 424-residue polypeptide: Histidine--tRNA ligase (424 aa).

It belongs to the class-II aminoacyl-tRNA synthetase family. Homodimer.

The protein resides in the cytoplasm. It carries out the reaction tRNA(His) + L-histidine + ATP = L-histidyl-tRNA(His) + AMP + diphosphate + H(+). This Shigella dysenteriae serotype 1 (strain Sd197) protein is Histidine--tRNA ligase.